Consider the following 194-residue polypeptide: MQLIEKAMLPTPWGNFLIFGFEEKKNGKNHVALVYGDIKTNTPTLSRVHSECLTGDAFFSLRCDCGSQLEMSMKRISQEGSGVLIYHRQEGRNIGLLNKIKAYALQDRGLDTVQANQKLGFSADERDFSLCADIFNILNIKKIRLLTNNPFKVQMLSDAGINIVERVPLIVKKNPKNAYYLKTKAEKMGHLLSE.

47 to 51 (RVHSE) is a GTP binding site. Residues Cys-52, Cys-63, and Cys-65 each contribute to the Zn(2+) site. Residues Gln-68, 90-92 (EGR), and Thr-112 each bind GTP. Asp-124 acts as the Proton acceptor in catalysis. Arg-126 acts as the Nucleophile in catalysis. GTP-binding residues include Thr-147 and Lys-152.

It belongs to the GTP cyclohydrolase II family. As to quaternary structure, homodimer. Zn(2+) is required as a cofactor.

It catalyses the reaction GTP + 4 H2O = 2,5-diamino-6-hydroxy-4-(5-phosphoribosylamino)-pyrimidine + formate + 2 phosphate + 3 H(+). Its pathway is cofactor biosynthesis; riboflavin biosynthesis; 5-amino-6-(D-ribitylamino)uracil from GTP: step 1/4. Catalyzes the conversion of GTP to 2,5-diamino-6-ribosylamino-4(3H)-pyrimidinone 5'-phosphate (DARP), formate and pyrophosphate. The chain is GTP cyclohydrolase-2 from Buchnera aphidicola subsp. Acyrthosiphon pisum (strain APS) (Acyrthosiphon pisum symbiotic bacterium).